The following is a 499-amino-acid chain: Probable cytosol aminopeptidase (499 aa).

Mn(2+)-binding residues include K271 and D276. K283 is an active-site residue. Residues D294, D353, and E355 each contribute to the Mn(2+) site. Residue R357 is part of the active site.

It belongs to the peptidase M17 family. Requires Mn(2+) as cofactor.

It localises to the cytoplasm. The enzyme catalyses Release of an N-terminal amino acid, Xaa-|-Yaa-, in which Xaa is preferably Leu, but may be other amino acids including Pro although not Arg or Lys, and Yaa may be Pro. Amino acid amides and methyl esters are also readily hydrolyzed, but rates on arylamides are exceedingly low.. It carries out the reaction Release of an N-terminal amino acid, preferentially leucine, but not glutamic or aspartic acids.. Functionally, presumably involved in the processing and regular turnover of intracellular proteins. Catalyzes the removal of unsubstituted N-terminal amino acids from various peptides. In Bordetella bronchiseptica (strain ATCC BAA-588 / NCTC 13252 / RB50) (Alcaligenes bronchisepticus), this protein is Probable cytosol aminopeptidase.